The following is a 245-amino-acid chain: Carboxy-S-adenosyl-L-methionine synthase (245 aa).

Residues Tyr42, 67 to 69, 92 to 93, 120 to 121, Asn135, and Arg202 each bind S-adenosyl-L-methionine; these read GCS, DN, and DI.

Belongs to the class I-like SAM-binding methyltransferase superfamily. Cx-SAM synthase family. As to quaternary structure, homodimer.

It catalyses the reaction prephenate + S-adenosyl-L-methionine = carboxy-S-adenosyl-L-methionine + 3-phenylpyruvate + H2O. Its function is as follows. Catalyzes the conversion of S-adenosyl-L-methionine (SAM) to carboxy-S-adenosyl-L-methionine (Cx-SAM). The chain is Carboxy-S-adenosyl-L-methionine synthase from Vibrio parahaemolyticus serotype O3:K6 (strain RIMD 2210633).